The primary structure comprises 307 residues: Ribosomal RNA small subunit methyltransferase H (307 aa).

Residues 32-34, D52, F78, D99, and Q106 each bind S-adenosyl-L-methionine; that span reads GGH.

Belongs to the methyltransferase superfamily. RsmH family.

The protein localises to the cytoplasm. The enzyme catalyses cytidine(1402) in 16S rRNA + S-adenosyl-L-methionine = N(4)-methylcytidine(1402) in 16S rRNA + S-adenosyl-L-homocysteine + H(+). Its function is as follows. Specifically methylates the N4 position of cytidine in position 1402 (C1402) of 16S rRNA. The polypeptide is Ribosomal RNA small subunit methyltransferase H (Acinetobacter baumannii (strain AB0057)).